Consider the following 372-residue polypeptide: Mevalonate 3,5-bisphosphate decarboxylase (372 aa).

The protein belongs to the mevalonate 3,5-bisphosphate decarboxylase family. As to quaternary structure, homodimer.

The enzyme catalyses (R)-3,5-bisphosphomevalonate + H(+) = isopentenyl phosphate + phosphate + CO2. Its pathway is isoprenoid biosynthesis; isopentenyl diphosphate biosynthesis via mevalonate pathway. In terms of biological role, catalyzes the ATP-independent decarboxylation of (R)-mevalonate 3,5-bisphosphate to isopentenyl phosphate. Functions in an alternative mevalonate pathway, only present in extreme acidophiles of the Thermoplasmatales order, which passes through mevalonate 3-phosphate rather than mevalonate 5-phosphate. In Thermoplasma volcanium (strain ATCC 51530 / DSM 4299 / JCM 9571 / NBRC 15438 / GSS1), this protein is Mevalonate 3,5-bisphosphate decarboxylase.